Reading from the N-terminus, the 1040-residue chain is MQVLPPSSTGGPSRLFIMRPVATTLLMVAILLAGIIGYRALPVSALPEVDYPTIQVVTLYPGASPDVMTSAVTAPLERQFGQMSGLKQMSSQSSGGASVITLQFQLTLPLDVAEQEVQAAINAATNLLPSDLPNPPVYSKVNPADPPIMTLAVTSTAMPMTQVEDMVETRVAQKISQISGVGLVTLSGGQRPAVRVKLNAQAIAALGLTSETVRTAITGANVNSAKGSLDGPSRAVTLSANDQMQSAEEYRQLIIAYQNGAPIRLGDVATVEQGAENSWLGAWANKEQAIVMNVQRQPGANIISTADSIRQMLPQLTESLPKSVKVTVLSDRTTNIRASVDDTQFELMMAITLVVMIIYLFLRNIPATIIPGVAVPLSLIGTFAVMVFLDFSINNLTLMALTIATGFVVDDAIVVIENISRYIEKGEKPLAAALKGAGEIGFTIISLTFSLIAVLIPLLFMGDIVGRLFREFAITLAVAILISAVVSLTLTPMMCARMLSQESLRKQNRFSRASEKMFDRIIAAYGRGLAKVLNHPWLTLSVALSTLLLSVLLWVFIPKGFFPVQDNGIIQGTLQAPQSSSFANMAQRQRQVADVILQDPAVQSLTSFVGVDGTNPSLNSARLQINLKPLDERDDRVQKVIARLQTAVDKVPGVDLFLQPTQDLTIDTQVSRTQYQFTLQATSLDALSTWVPQLMEKLQQLPQISDVSSDWQDKGLVAYVNVDRDSASRLGISMADVDNALYNAFGQRLISTIYTQANQYRVVLEHNTENTPGLAALDTIRLTSSDGGVVPLSSIAKIEQRFAPLSINHLDQFPVTTISFNVPDNYSLGDAVQAIMDTEKTLNLPVDITTQFQGSTLAFQSALGSTVWLIVAAVVAMYIVLGILYESFIHPITILSTLPTAGVGALLALMIAGSELDVIAIIGIILLIGIVKKNAIMMIDFALAAEREQGMSPRDAIYQACLLRFRPILMTTLAALLGALPLMLSTGVGAELRRPLGIGMVGGLIVSQVLTLFTTPVIYLLFDRLALWTKSRFARHEEEA.

A run of 12 helical transmembrane segments spans residues 16–36 (FIMR…AGII), 347–367 (LMMA…NIPA), 369–389 (IIPG…MVFL), 396–416 (LTLM…IVVI), 440–460 (IGFT…PLLF), 472–492 (FAIT…TLTP), 537–557 (WLTL…WVFI), 863–883 (LGST…VLGI), 888–908 (FIHP…ALLA), 911–931 (IAGS…IGIV), 968–988 (ILMT…STGV), and 998–1018 (IGMV…TPVI).

It belongs to the resistance-nodulation-cell division (RND) (TC 2.A.6) family. MdtB subfamily. As to quaternary structure, part of a tripartite efflux system composed of MdtA, MdtB and MdtC. MdtB forms a heteromultimer with MdtC.

The protein resides in the cell inner membrane. Its function is as follows. The MdtABC tripartite complex confers resistance against novobiocin and deoxycholate. The polypeptide is Multidrug resistance protein MdtB (Escherichia coli O157:H7 (strain EC4115 / EHEC)).